The chain runs to 133 residues: Small ribosomal subunit protein uS19 (133 aa).

Belongs to the universal ribosomal protein uS19 family.

Functionally, protein S19 forms a complex with S13 that binds strongly to the 16S ribosomal RNA. This is Small ribosomal subunit protein uS19 from Thermococcus onnurineus (strain NA1).